The chain runs to 635 residues: Threonine--tRNA ligase (635 aa).

Residues 1–61 (MIAITLPDGS…EQNVDLAIVT (61 aa)) enclose the TGS domain. The catalytic stretch occupies residues 242 to 533 (DHRKLGKLLD…LLENHAGALP (292 aa)). Zn(2+) contacts are provided by Cys333, His384, and His510.

It belongs to the class-II aminoacyl-tRNA synthetase family. Homodimer. It depends on Zn(2+) as a cofactor.

Its subcellular location is the cytoplasm. It carries out the reaction tRNA(Thr) + L-threonine + ATP = L-threonyl-tRNA(Thr) + AMP + diphosphate + H(+). Catalyzes the attachment of threonine to tRNA(Thr) in a two-step reaction: L-threonine is first activated by ATP to form Thr-AMP and then transferred to the acceptor end of tRNA(Thr). Also edits incorrectly charged L-seryl-tRNA(Thr). This is Threonine--tRNA ligase from Ralstonia nicotianae (strain ATCC BAA-1114 / GMI1000) (Ralstonia solanacearum).